Consider the following 475-residue polypeptide: Sulfate adenylyltransferase subunit 1 (475 aa).

The tr-type G domain maps to 25-239; that stretch reads KSLLRFLTCG…EVLETVEIQR (215 aa). Residues 34–41 form a G1 region; the sequence is GSVDDGKS. Residue 34-41 participates in GTP binding; sequence GSVDDGKS. The tract at residues 92 to 96 is G2; that stretch reads GITID. Residues 113-116 are G3; sequence DTPG. GTP-binding positions include 113–117 and 168–171; these read DTPGH and NKMD. Residues 168 to 171 form a G4 region; that stretch reads NKMD. The segment at 206-208 is G5; the sequence is SAL.

Belongs to the TRAFAC class translation factor GTPase superfamily. Classic translation factor GTPase family. CysN/NodQ subfamily. Heterodimer composed of CysD, the smaller subunit, and CysN.

It catalyses the reaction sulfate + ATP + H(+) = adenosine 5'-phosphosulfate + diphosphate. The protein operates within sulfur metabolism; hydrogen sulfide biosynthesis; sulfite from sulfate: step 1/3. With CysD forms the ATP sulfurylase (ATPS) that catalyzes the adenylation of sulfate producing adenosine 5'-phosphosulfate (APS) and diphosphate, the first enzymatic step in sulfur assimilation pathway. APS synthesis involves the formation of a high-energy phosphoric-sulfuric acid anhydride bond driven by GTP hydrolysis by CysN coupled to ATP hydrolysis by CysD. In Escherichia coli O17:K52:H18 (strain UMN026 / ExPEC), this protein is Sulfate adenylyltransferase subunit 1.